Here is a 447-residue protein sequence, read N- to C-terminus: Signal recognition particle 54 kDa protein (447 aa).

GTP is bound by residues 108-115 (GLYGMGKT), 188-192 (DTAGR), and 246-249 (TKLD).

The protein belongs to the GTP-binding SRP family. SRP54 subfamily. As to quaternary structure, part of the signal recognition particle protein translocation system, which is composed of SRP and FtsY. Archaeal SRP consists of a 7S RNA molecule of 300 nucleotides and two protein subunits: SRP54 and SRP19.

It is found in the cytoplasm. It catalyses the reaction GTP + H2O = GDP + phosphate + H(+). Functionally, involved in targeting and insertion of nascent membrane proteins into the cytoplasmic membrane. Binds to the hydrophobic signal sequence of the ribosome-nascent chain (RNC) as it emerges from the ribosomes. The SRP-RNC complex is then targeted to the cytoplasmic membrane where it interacts with the SRP receptor FtsY. The chain is Signal recognition particle 54 kDa protein from Methanopyrus kandleri (strain AV19 / DSM 6324 / JCM 9639 / NBRC 100938).